A 365-amino-acid chain; its full sequence is Peptide chain release factor 2 (365 aa).

An N5-methylglutamine modification is found at Q252.

It belongs to the prokaryotic/mitochondrial release factor family. Post-translationally, methylated by PrmC. Methylation increases the termination efficiency of RF2.

It localises to the cytoplasm. In terms of biological role, peptide chain release factor 2 directs the termination of translation in response to the peptide chain termination codons UGA and UAA. In Proteus mirabilis (strain HI4320), this protein is Peptide chain release factor 2.